Reading from the N-terminus, the 422-residue chain is Probable glucuronosyltransferase Os01g0926400 (422 aa).

Residues 1–8 (MGTRPCAG) are Cytoplasmic-facing. The helical; Signal-anchor for type II membrane protein transmembrane segment at 9 to 29 (VASAVAAAVAVLLLAVSCFAA) threads the bilayer. The Lumenal portion of the chain corresponds to 30–422 (AATTTQKHGR…QGLENDLKPW (393 aa)). Asn149 is a glycosylation site (N-linked (GlcNAc...) asparagine).

The protein belongs to the glycosyltransferase 47 family.

It localises to the golgi apparatus membrane. In terms of biological role, involved in the synthesis of glucuronoxylan hemicellulose in secondary cell walls. This Oryza sativa subsp. japonica (Rice) protein is Probable glucuronosyltransferase Os01g0926400.